The primary structure comprises 127 residues: Fluoride-specific ion channel FluC (127 aa).

The next 4 membrane-spanning stretches (helical) occupy residues 7–27 (VYVALGGALGAVSRYLIVAWV), 38–58 (GTLAVNLLGSFLLGTAFVYVV), 70–90 (LIMVGFLGALTTFSTFSLEAW), and 102–122 (LAYILMSVILCLFAVSAGIAL). Residues Gly77 and Thr80 each coordinate Na(+).

The protein belongs to the fluoride channel Fluc/FEX (TC 1.A.43) family.

It is found in the cell inner membrane. The catalysed reaction is fluoride(in) = fluoride(out). With respect to regulation, na(+) is not transported, but it plays an essential structural role and its presence is essential for fluoride channel function. Fluoride-specific ion channel. Important for reducing fluoride concentration in the cell, thus reducing its toxicity. The protein is Fluoride-specific ion channel FluC of Hahella chejuensis (strain KCTC 2396).